Reading from the N-terminus, the 102-residue chain is Small ribosomal subunit protein uS10 (102 aa).

The protein belongs to the universal ribosomal protein uS10 family. Part of the 30S ribosomal subunit.

Involved in the binding of tRNA to the ribosomes. In Chlorobium phaeobacteroides (strain BS1), this protein is Small ribosomal subunit protein uS10.